The following is a 282-amino-acid chain: Pantothenate synthetase (282 aa).

Residue 30–37 (MGYLHEGH) coordinates ATP. The active-site Proton donor is H37. Q61 is a (R)-pantoate binding site. Q61 contacts beta-alanine. 147–150 (GMKD) serves as a coordination point for ATP. Q153 provides a ligand contact to (R)-pantoate. ATP-binding positions include V176 and 184–187 (KSSR).

The protein belongs to the pantothenate synthetase family. In terms of assembly, homodimer.

The protein localises to the cytoplasm. The catalysed reaction is (R)-pantoate + beta-alanine + ATP = (R)-pantothenate + AMP + diphosphate + H(+). Its pathway is cofactor biosynthesis; (R)-pantothenate biosynthesis; (R)-pantothenate from (R)-pantoate and beta-alanine: step 1/1. Functionally, catalyzes the condensation of pantoate with beta-alanine in an ATP-dependent reaction via a pantoyl-adenylate intermediate. The protein is Pantothenate synthetase of Bacillus cereus (strain ZK / E33L).